Reading from the N-terminus, the 815-residue chain is Translation initiation factor IF-2 (815 aa).

Residues 315–482 form the tr-type G domain; sequence ARPPVVTIMG…AISLTAEVLE (168 aa). Residues 324–331 are G1; it reads GHVDHGKT. 324 to 331 is a GTP binding site; it reads GHVDHGKT. The tract at residues 349-353 is G2; that stretch reads GITQH. Residues 370–373 form a G3 region; sequence DTPG. GTP-binding positions include 370–374 and 424–427; these read DTPGH and NKID. The G4 stretch occupies residues 424-427; the sequence is NKID. Residues 460 to 462 are G5; it reads SAY.

This sequence belongs to the TRAFAC class translation factor GTPase superfamily. Classic translation factor GTPase family. IF-2 subfamily.

The protein localises to the cytoplasm. In terms of biological role, one of the essential components for the initiation of protein synthesis. Protects formylmethionyl-tRNA from spontaneous hydrolysis and promotes its binding to the 30S ribosomal subunits. Also involved in the hydrolysis of GTP during the formation of the 70S ribosomal complex. In Ruthia magnifica subsp. Calyptogena magnifica, this protein is Translation initiation factor IF-2.